We begin with the raw amino-acid sequence, 264 residues long: Meiotic recombination protein REC102 (264 aa).

The protein belongs to the TOP6B-like family. Interacts with REC104; seems to form a functional unit with REC104. REC102-REC104 interacts with SKI8-SPO11 and this interaction is required for proper subcellular location of the proteins during the initiation of recombination. Interacts with MEI4, REC114 and SPO11.

The protein localises to the nucleus. Required for formation of the SPO11-mediated double-strand breaks (DSBs) that initiate meiotic recombination. May mediate the interaction between SPO11 subunits during meiosis. Also needed for homolog chromosome pairing, synaptonemal complex formation, and for the proper timing of the first meiotic division. Not required for mitosis and mitotic DNA repair mechanisms. The polypeptide is Meiotic recombination protein REC102 (Saccharomyces cerevisiae (strain ATCC 204508 / S288c) (Baker's yeast)).